A 778-amino-acid polypeptide reads, in one-letter code: Mitochondrial intermediate peptidase (778 aa).

The transit peptide at 1-37 (MIRTVTRPRQWQRWVYSSCLLQRAVPPAAARQQPRFT) directs the protein to the mitochondrion. His-557 contacts Zn(2+). Glu-558 is a catalytic residue. Zn(2+)-binding residues include His-561 and His-564.

It belongs to the peptidase M3 family. Requires Zn(2+) as cofactor.

The protein localises to the mitochondrion matrix. It catalyses the reaction Release of an N-terminal octapeptide as second stage of processing of some proteins imported into the mitochondrion.. In terms of biological role, cleaves proteins, imported into the mitochondrion, to their mature size. While most mitochondrial precursor proteins are processed to the mature form in one step by mitochondrial processing peptidase (MPP), the sequential cleavage by MIP of an octapeptide after initial processing by MPP is a required step for a subgroup of nuclear-encoded precursor proteins destined for the matrix or the inner membrane. This Chaetomium globosum (strain ATCC 6205 / CBS 148.51 / DSM 1962 / NBRC 6347 / NRRL 1970) (Soil fungus) protein is Mitochondrial intermediate peptidase (OCT1).